The primary structure comprises 101 residues: Interleukin-8 (101 aa).

An N-terminal signal peptide occupies residues 1-22 (MTSKLVVALLAAFMLSAALCEA). Citrulline is present on Arg-27. 2 disulfide bridges follow: Cys-34-Cys-61 and Cys-36-Cys-77.

This sequence belongs to the intercrine alpha (chemokine CxC) family. Homodimer. Interacts with TNFAIP6 (via Link domain); this interaction interferes with chemokine binding to glycosaminoglycans. In terms of processing, citrullination at Arg-27 prevents proteolysis, and dampens tissue inflammation, it also enhances leukocytosis, possibly through impaired chemokine clearance from the blood circulation.

It localises to the secreted. Its function is as follows. Chemotactic factor that mediates inflammatory response by attracting neutrophils, basophils, and T-cells to clear pathogens and protect the host from infection. Also plays an important role in neutrophil activation. Released in response to an inflammatory stimulus, exerts its effect by binding to the G-protein-coupled receptors CXCR1 and CXCR2, primarily found in neutrophils, monocytes and endothelial cells. G-protein heterotrimer (alpha, beta, gamma subunits) constitutively binds to CXCR1/CXCR2 receptor and activation by IL8 leads to beta and gamma subunits release from Galpha (GNAI2 in neutrophils) and activation of several downstream signaling pathways including PI3K and MAPK pathways. This is Interleukin-8 (CXCL8) from Felis catus (Cat).